The primary structure comprises 317 residues: Acetyl-coenzyme A carboxylase carboxyl transferase subunit alpha (317 aa).

The region spanning 37-291 (KLQEKVDKLL…GNAIEDALDD (255 aa)) is the CoA carboxyltransferase C-terminal domain.

It belongs to the AccA family. As to quaternary structure, acetyl-CoA carboxylase is a heterohexamer composed of biotin carboxyl carrier protein (AccB), biotin carboxylase (AccC) and two subunits each of ACCase subunit alpha (AccA) and ACCase subunit beta (AccD).

It is found in the cytoplasm. The enzyme catalyses N(6)-carboxybiotinyl-L-lysyl-[protein] + acetyl-CoA = N(6)-biotinyl-L-lysyl-[protein] + malonyl-CoA. Its pathway is lipid metabolism; malonyl-CoA biosynthesis; malonyl-CoA from acetyl-CoA: step 1/1. Its function is as follows. Component of the acetyl coenzyme A carboxylase (ACC) complex. First, biotin carboxylase catalyzes the carboxylation of biotin on its carrier protein (BCCP) and then the CO(2) group is transferred by the carboxyltransferase to acetyl-CoA to form malonyl-CoA. The protein is Acetyl-coenzyme A carboxylase carboxyl transferase subunit alpha of Rhodospirillum centenum (strain ATCC 51521 / SW).